The sequence spans 245 residues: Chymotrypsinogen A (245 aa).

5 disulfide bridges follow: cysteine 1–cysteine 122, cysteine 42–cysteine 58, cysteine 136–cysteine 201, cysteine 168–cysteine 182, and cysteine 191–cysteine 220. Residues 14-15 (SR) constitute a propeptide that is removed on maturation. Residues 16-243 (IVNGEEAVPG…LVNWVQQTLA (228 aa)) enclose the Peptidase S1 domain. Catalysis depends on charge relay system residues histidine 57 and aspartate 102. The propeptide occupies 147–148 (TN). Serine 195 acts as the Charge relay system in catalysis.

The protein belongs to the peptidase S1 family.

The protein resides in the secreted. Its subcellular location is the extracellular space. The enzyme catalyses Preferential cleavage: Tyr-|-Xaa, Trp-|-Xaa, Phe-|-Xaa, Leu-|-Xaa.. The protein is Chymotrypsinogen A of Bos taurus (Bovine).